Reading from the N-terminus, the 236-residue chain is L-aspartate dehydrogenase (236 aa).

Residues 10–11 (AI), D31, 58–59 (AS), Y66, 80–81 (LS), A111, and N162 each bind NAD(+). The active site involves H189. 212-215 (NPKT) contacts NAD(+).

The protein belongs to the L-aspartate dehydrogenase family. As to quaternary structure, homodimer.

It carries out the reaction L-aspartate + NADP(+) + H2O = oxaloacetate + NH4(+) + NADPH + H(+). It catalyses the reaction L-aspartate + NAD(+) + H2O = oxaloacetate + NH4(+) + NADH + H(+). Its pathway is cofactor biosynthesis; NAD(+) biosynthesis; iminoaspartate from L-aspartate (dehydrogenase route): step 1/1. In terms of biological role, specifically catalyzes the NAD or NADP-dependent dehydrogenation of L-aspartate to iminoaspartate. This Archaeoglobus fulgidus (strain ATCC 49558 / DSM 4304 / JCM 9628 / NBRC 100126 / VC-16) protein is L-aspartate dehydrogenase.